Here is a 143-residue protein sequence, read N- to C-terminus: Hemoglobin subunit alpha-2 (143 aa).

Ser2 is modified (N-acetylserine). The 142-residue stretch at Ser2 to Arg143 folds into the Globin domain. His60 is a binding site for O2. Position 89 (His89) interacts with heme b.

It belongs to the globin family. Hb2 is a heterotetramer of two alpha-2 chains and two beta-1 chains; Hb3 is a heterotetramer of two alpha-2 chains and two beta-2 chains. In terms of tissue distribution, red blood cells.

Functionally, involved in oxygen transport from gills to the various peripheral tissues. The protein is Hemoglobin subunit alpha-2 (hba2) of Anarhichas minor (Arctic spotted wolffish).